The sequence spans 260 residues: Adenosylcobinamide-GDP ribazoletransferase (260 aa).

6 helical membrane passes run 40–60 (AFPF…LLLL), 64–84 (TDPL…TGAL), 117–137 (YGAI…AAII), 142–162 (PLAA…AIAW), 188–208 (HFAL…PFGL), and 210–230 (PLVA…VFIR).

The protein belongs to the CobS family. Mg(2+) is required as a cofactor.

The protein resides in the cell inner membrane. It catalyses the reaction alpha-ribazole + adenosylcob(III)inamide-GDP = adenosylcob(III)alamin + GMP + H(+). It carries out the reaction alpha-ribazole 5'-phosphate + adenosylcob(III)inamide-GDP = adenosylcob(III)alamin 5'-phosphate + GMP + H(+). The protein operates within cofactor biosynthesis; adenosylcobalamin biosynthesis; adenosylcobalamin from cob(II)yrinate a,c-diamide: step 7/7. Joins adenosylcobinamide-GDP and alpha-ribazole to generate adenosylcobalamin (Ado-cobalamin). Also synthesizes adenosylcobalamin 5'-phosphate from adenosylcobinamide-GDP and alpha-ribazole 5'-phosphate. This is Adenosylcobinamide-GDP ribazoletransferase from Rhizobium etli (strain ATCC 51251 / DSM 11541 / JCM 21823 / NBRC 15573 / CFN 42).